The sequence spans 949 residues: ATPase 1, plasma membrane-type (949 aa).

An N-acetylserine modification is found at serine 2. The Cytoplasmic segment spans residues 2 to 61 (SGLEDIKNETVDLEKIPIEEVFQQLKCTREGLTTQEGEDRIVIFGPNKLEEKKESKILKF). A helical transmembrane segment spans residues 62-81 (LGFMWNPLSWVMEAAALMAI). The Extracellular segment spans residues 82-93 (ALANGDNRPPDW). The chain crosses the membrane as a helical span at residues 94 to 114 (QDFVGIICLLVINSTISFIEE). Over 115 to 243 (NNAGNAAAAL…GHFQKVLTSI (129 aa)) the chain is Cytoplasmic. A helical transmembrane segment spans residues 244–264 (GNFCICSIAIGIAIEIVVMYP). Residues 265–273 (IQHRKYRDG) are Extracellular-facing. Residues 274–291 (IDNLLVLLIGGIPIAMPT) form a helical membrane-spanning segment. Residues 292-643 (VLSVTMAIGS…TSRAIFQRMK (352 aa)) lie on the Cytoplasmic side of the membrane. Aspartate 329 functions as the 4-aspartylphosphate intermediate in the catalytic mechanism. Mg(2+) is bound by residues aspartate 588 and aspartate 592. A helical membrane pass occupies residues 644–665 (NYTIYAVSITIRIVFGFMLIAL). At 666–670 (IWEFD) the chain is on the extracellular side. Residues 671-693 (FSAFMVLIIAILNDGTIMTISKD) traverse the membrane as a helical segment. Topologically, residues 694–709 (RVKPSPTPDSWKLKEI) are cytoplasmic. A helical membrane pass occupies residues 710–730 (FATGIVLGGYQAIMSVIFFWA). Topologically, residues 731–751 (AHKTDFFSDKFGVRSIRDNND) are extracellular. Residues 752 to 772 (ELMGAVYLQVSIISQALIFVT) traverse the membrane as a helical segment. Over 773–784 (RSRSWSFVERPG) the chain is Cytoplasmic. Residues 785–805 (ALLMIAFVIAQLVATLIAVYA) traverse the membrane as a helical segment. Residues 806 to 813 (DWTFAKVK) are Extracellular-facing. A helical transmembrane segment spans residues 814-834 (GIGWGWAGVIWIYSIVTYFPQ). The Cytoplasmic portion of the chain corresponds to 835–949 (DILKFAIRYI…IDTAGHHYTV (115 aa)). At threonine 881 the chain carries Phosphothreonine. Residues serine 899 and serine 931 each carry the phosphoserine modification. The tract at residues 947-949 (YTV) is interaction with 14-3-3 proteins. Threonine 948 carries the phosphothreonine modification.

This sequence belongs to the cation transport ATPase (P-type) (TC 3.A.3) family. Type IIIA subfamily. In terms of assembly, binds to 14-3-3 proteins. The binding is induced by phosphorylation of Thr-948. Binding to 14-3-3 proteins activates the H(+)-ATPase. Interacts with PPI1; this interaction promotes ATPase activity. Interacts with PSY1R. Part of a functional complex containing PSKR1, BAK1, CNGC17, and AHA. Interacts with CNGC17 and PSKR1. Triggered by SAUR9 via the phosphorylation of the C-terminal autoinhibitory domain. Interacts with AHA2. Binds to CBC1 and CBC2. Post-translationally, phosphorylated, probably by PHOT1 and PHOT2, at C-terminal Thr-948 in guard cells in response to blue light to induce stomatal opening. Expressed in guard cells, mesophyll cells, leaves and roots.

It is found in the cell membrane. It catalyses the reaction ATP + H2O + H(+)(in) = ADP + phosphate + 2 H(+)(out). With respect to regulation, phosphorylation on Thr residues is repressed by tyrphostin 9, sphingosine, GW5074 and BML-265. By contrast, the fungal phytotoxin fusicoccin (FC) promotes phosphorylation of Thr-948 independently to BHP, thus leading to large stomatal opening. In terms of biological role, the plasma membrane H(+) ATPase of plants and fungi generates a proton gradient that drives the active transport of nutrients by H(+)-symport. The resulting external acidification and/or internal alkinization may mediate growth responses. Forms a functional cation-translocating unit with CNGC17 that is activated by PSKR1/BAK1 and possibly other BAK1/RLK complexes. Promotes stomatal opening in response to blue light. The polypeptide is ATPase 1, plasma membrane-type (Arabidopsis thaliana (Mouse-ear cress)).